The following is a 162-amino-acid chain: Eukaryotic translation initiation factor 5 (162 aa).

A disordered region spans residues 59–162 (PPNLNPAVQG…EKDRMDIFYE (104 aa)). Positions 85–109 (GDTNGDTSQVDDQNESLEASVNENS) are enriched in polar residues. A compositionally biased stretch (basic and acidic residues) spans 148–162 (DLEKREKDRMDIFYE).

It belongs to the eIF-2-beta/eIF-5 family.

Its function is as follows. Catalyzes the hydrolysis of GTP bound to the 40S ribosomal initiation complex (40S.mRNA.Met-tRNA[F].eIF-2.GTP) with the subsequent joining of a 60S ribosomal subunit resulting in the release of eIF-2 and the guanine nucleotide. The subsequent joining of a 60S ribosomal subunit results in the formation of a functional 80S initiation complex (80S.mRNA.Met-tRNA[F]). This Tribolium castaneum (Red flour beetle) protein is Eukaryotic translation initiation factor 5.